Here is a 217-residue protein sequence, read N- to C-terminus: Germin-like protein subfamily 1 member 1 (217 aa).

The signal sequence occupies residues 1-18 (MILNILLTLTLLMGRVKS). An intrachain disulfide couples cysteine 27 to cysteine 45. The Cupin type-1 domain occupies 59 to 209 (SALSRPGNTK…AYDINGQDVA (151 aa)). Asparagine 75 carries N-linked (GlcNAc...) asparagine glycosylation. Residues histidine 108, histidine 110, glutamate 115, and histidine 154 each coordinate Mn(2+).

Belongs to the germin family. Oligomer (believed to be a pentamer but probably hexamer).

Its subcellular location is the secreted. It is found in the extracellular space. The protein localises to the apoplast. May play a role in plant defense. Probably has no oxalate oxidase activity even if the active site is conserved. The sequence is that of Germin-like protein subfamily 1 member 1 (GLP7) from Arabidopsis thaliana (Mouse-ear cress).